Here is a 1386-residue protein sequence, read N- to C-terminus: DNA-directed RNA polymerase subunit beta'' (1386 aa).

Cys220, Cys289, Cys296, and Cys299 together coordinate Zn(2+).

Belongs to the RNA polymerase beta' chain family. RpoC2 subfamily. In plastids the minimal PEP RNA polymerase catalytic core is composed of four subunits: alpha, beta, beta', and beta''. When a (nuclear-encoded) sigma factor is associated with the core the holoenzyme is formed, which can initiate transcription. Zn(2+) is required as a cofactor.

Its subcellular location is the plastid. The protein localises to the chloroplast. The enzyme catalyses RNA(n) + a ribonucleoside 5'-triphosphate = RNA(n+1) + diphosphate. Functionally, DNA-dependent RNA polymerase catalyzes the transcription of DNA into RNA using the four ribonucleoside triphosphates as substrates. The polypeptide is DNA-directed RNA polymerase subunit beta'' (Marchantia polymorpha (Common liverwort)).